Here is a 221-residue protein sequence, read N- to C-terminus: uncharacterized protein (221 aa).

The next 6 membrane-spanning stretches (helical) occupy residues 33–55 (YFLL…ISYI), 70–92 (FGYR…QKIV), 99–121 (LEML…FIII), 125–147 (YGAY…YTLL), 154–176 (YFND…SFWI), and 186–208 (IISM…ITLI).

The protein localises to the cell membrane. This is an uncharacterized protein from Aquifex aeolicus (strain VF5).